A 641-amino-acid chain; its full sequence is Protein zwilch (641 aa).

Phosphoserine is present on Ser-312.

The protein belongs to the ZWILCH family. In terms of assembly, component of the RZZ complex composed of rod, Zw10 and Zwilch.

It is found in the cytoplasm. It localises to the chromosome. Its subcellular location is the centromere. The protein resides in the kinetochore. The protein localises to the cytoskeleton. It is found in the spindle. In terms of biological role, essential component of the mitotic checkpoint, which prevents cells from prematurely exiting mitosis. Required for the assembly of the dynein-dynactin, Mad2 complexes and spindly/CG15415 onto kinetochores. Its function related to the spindle assembly machinery is proposed to depend on its association in the RZZ complex. Failure to assemble the complex due to the absence of any one of its components, results in the incorrect redistribution of the remaining components to diverse membrane compartments. The chain is Protein zwilch from Drosophila melanogaster (Fruit fly).